Here is a 284-residue protein sequence, read N- to C-terminus: NH(3)-dependent NAD(+) synthetase (284 aa).

Residue 51–58 coordinates ATP; that stretch reads GISGGIDS. Residue aspartate 57 coordinates Mg(2+). Arginine 148 is a deamido-NAD(+) binding site. Residue threonine 168 coordinates ATP. Glutamate 173 lines the Mg(2+) pocket. Lysine 181 and aspartate 188 together coordinate deamido-NAD(+). Positions 197 and 219 each coordinate ATP. A deamido-NAD(+)-binding site is contributed by 268–269; the sequence is HK.

It belongs to the NAD synthetase family. In terms of assembly, homodimer.

It catalyses the reaction deamido-NAD(+) + NH4(+) + ATP = AMP + diphosphate + NAD(+) + H(+). The protein operates within cofactor biosynthesis; NAD(+) biosynthesis; NAD(+) from deamido-NAD(+) (ammonia route): step 1/1. Functionally, catalyzes the ATP-dependent amidation of deamido-NAD to form NAD. Uses ammonia as a nitrogen source. The chain is NH(3)-dependent NAD(+) synthetase from Burkholderia pseudomallei (strain 1106a).